A 526-amino-acid polypeptide reads, in one-letter code: Cholesterol side-chain cleavage enzyme, mitochondrial (526 aa).

The transit peptide at 1 to 36 (MLAKGLCLRSVLVKSCQPFLSPVWQGPGLATGNGAG) directs the protein to the mitochondrion. Residue Cys459 participates in heme binding.

Belongs to the cytochrome P450 family. As to quaternary structure, interacts with FDX1/adrenodoxin. Heme serves as cofactor. In terms of tissue distribution, expressed in the kidney where it localizes to the distal convoluted tubule and the thick ascending limb of the loop of Henle (at protein level). In the ovary, highly expressed in interstitial cells (at protein level). Also expressed in adrenal gland and testis.

The protein resides in the mitochondrion inner membrane. The catalysed reaction is 6 reduced [adrenodoxin] + cholesterol + 3 O2 + 6 H(+) = 4-methylpentanal + pregnenolone + 6 oxidized [adrenodoxin] + 4 H2O. It catalyses the reaction 2 reduced [adrenodoxin] + cholesterol + O2 + 2 H(+) = (22R)-hydroxycholesterol + 2 oxidized [adrenodoxin] + H2O. The enzyme catalyses (22R)-hydroxycholesterol + 2 reduced [adrenodoxin] + O2 + 2 H(+) = (20R,22R)-20,22-dihydroxycholesterol + 2 oxidized [adrenodoxin] + H2O. It carries out the reaction (20R,22R)-20,22-dihydroxycholesterol + 2 reduced [adrenodoxin] + O2 + 2 H(+) = 4-methylpentanal + pregnenolone + 2 oxidized [adrenodoxin] + 2 H2O. Its pathway is lipid metabolism; C21-steroid hormone metabolism. It functions in the pathway steroid metabolism; cholesterol metabolism. In terms of biological role, a cytochrome P450 monooxygenase that catalyzes the side-chain hydroxylation and cleavage of cholesterol to pregnenolone, the precursor of most steroid hormones. Catalyzes three sequential oxidation reactions of cholesterol, namely the hydroxylation at C22 followed with the hydroxylation at C20 to yield 20R,22R-hydroxycholesterol that is further cleaved between C20 and C22 to yield the C21-steroid pregnenolone and 4-methylpentanal. Mechanistically, uses molecular oxygen inserting one oxygen atom into a substrate and reducing the second into a water molecule. Two electrons are provided by NADPH via a two-protein mitochondrial transfer system comprising flavoprotein FDXR (adrenodoxin/ferredoxin reductase) and nonheme iron-sulfur protein FDX1 or FDX2 (adrenodoxin/ferredoxin). This chain is Cholesterol side-chain cleavage enzyme, mitochondrial, found in Rattus norvegicus (Rat).